The chain runs to 204 residues: Linker for activation of T-cells family member 2 (204 aa).

At 1–7 the chain is on the extracellular side; sequence MNAELEL. Residues 8-28 form a helical; Signal-anchor for type III membrane protein membrane-spanning segment; sequence LWPLSGLLLLLLLGTTAWLCV. S-palmitoyl cysteine attachment occurs at residues Cys27 and Cys30. Residues 29–204 lie on the Cytoplasmic side of the membrane; that stretch reads QCSRPGVKRN…NGDVATTEKI (176 aa). Tyr60 carries the post-translational modification Phosphotyrosine. A phosphoserine mark is found at Ser61 and Ser96. Phosphotyrosine occurs at positions 140, 161, and 193. Positions 147–204 are disordered; that stretch reads KPSTPESGTEESEDYQNSVSILQWRESKRTMGARTSPSGSPDEEPDYVNGDVATTEKI.

As to quaternary structure, when phosphorylated, interacts with GRB2. May also interact with SOS1, GAB1 and CBL. In terms of processing, phosphorylated on tyrosines following cross-linking of BCR in B-cells, high affinity IgG receptor (FCGR1) in myeloid cells, or high affinity IgE receptor (FCER1) in mast cells; which induces the recruitment of GRB2.

It is found in the cell membrane. Its function is as follows. Involved in FCER1 (high affinity immunoglobulin epsilon receptor)-mediated signaling in mast cells. May also be involved in BCR (B-cell antigen receptor)-mediated signaling in B-cells and FCGR1 (high affinity immunoglobulin gamma Fc receptor I)-mediated signaling in myeloid cells. Couples activation of these receptors and their associated kinases with distal intracellular events through the recruitment of GRB2. In Rattus norvegicus (Rat), this protein is Linker for activation of T-cells family member 2 (Lat2).